The following is a 171-amino-acid chain: MGDLTSTNLASAILAAEEGGGTSNFLLPNGTFFAVLLIFLIVLGVIAKWVVPPISKVLAEREAMLAKTAADNRKSAEQVAAARADYDKTLAEARGEASSIRDEARVAGRQVVDEKRATANGEVAETVKTADEKLTQQGSAAQSELQSSVDALSATLASRILGVDVNTRGSQ.

The helical transmembrane segment at phenylalanine 32–proline 52 threads the bilayer.

Belongs to the ATPase B chain family. As to quaternary structure, F-type ATPases have 2 components, F(1) - the catalytic core - and F(0) - the membrane proton channel. F(1) has five subunits: alpha(3), beta(3), gamma(1), delta(1), epsilon(1). F(0) has three main subunits: a(1), b(2) and c(10-14). The alpha and beta chains form an alternating ring which encloses part of the gamma chain. F(1) is attached to F(0) by a central stalk formed by the gamma and epsilon chains, while a peripheral stalk is formed by the delta and b chains.

The protein resides in the cell membrane. Its function is as follows. F(1)F(0) ATP synthase produces ATP from ADP in the presence of a proton or sodium gradient. F-type ATPases consist of two structural domains, F(1) containing the extramembraneous catalytic core and F(0) containing the membrane proton channel, linked together by a central stalk and a peripheral stalk. During catalysis, ATP synthesis in the catalytic domain of F(1) is coupled via a rotary mechanism of the central stalk subunits to proton translocation. In terms of biological role, component of the F(0) channel, it forms part of the peripheral stalk, linking F(1) to F(0). The sequence is that of ATP synthase subunit b from Mycolicibacterium gilvum (strain PYR-GCK) (Mycobacterium gilvum (strain PYR-GCK)).